The primary structure comprises 317 residues: 3'-5' exoribonuclease YhaM (317 aa).

A DNA-binding region (OB) is located at residues 17–90; it reads FLLIKESTRG…QLKILSIRLS (74 aa). The 117-residue stretch at 163-279 folds into the HD domain; sequence HVVSMLAIGK…LHLIDLIDAK (117 aa).

It belongs to the YhaM family.

In terms of biological role, shows a 3'-5' exoribonuclease activity. This Oceanobacillus iheyensis (strain DSM 14371 / CIP 107618 / JCM 11309 / KCTC 3954 / HTE831) protein is 3'-5' exoribonuclease YhaM.